A 1409-amino-acid polypeptide reads, in one-letter code: DNA-directed RNA polymerase subunit beta' (1409 aa).

4 residues coordinate Zn(2+): Cys-70, Cys-72, Cys-85, and Cys-88. Mg(2+) is bound by residues Asp-460, Asp-462, and Asp-464. Zn(2+) is bound by residues Cys-814, Cys-888, Cys-895, and Cys-898.

It belongs to the RNA polymerase beta' chain family. The RNAP catalytic core consists of 2 alpha, 1 beta, 1 beta' and 1 omega subunit. When a sigma factor is associated with the core the holoenzyme is formed, which can initiate transcription. Mg(2+) serves as cofactor. Requires Zn(2+) as cofactor.

It carries out the reaction RNA(n) + a ribonucleoside 5'-triphosphate = RNA(n+1) + diphosphate. In terms of biological role, DNA-dependent RNA polymerase catalyzes the transcription of DNA into RNA using the four ribonucleoside triphosphates as substrates. This Shewanella violacea protein is DNA-directed RNA polymerase subunit beta'.